The sequence spans 35 residues: Coatomer subunit alpha (35 aa).

In terms of assembly, oligomeric complex that consists of at least the alpha, beta, beta', gamma, delta, epsilon and zeta subunits. Interacts with SCYL1. Interacts with JAGN1. Interacts with TMEM41B. Interacts with SVEP1. Probably interacts with PEX11A. As to expression, gastric, duodenal and jejunal mucosa. Circulates in the blood. Seems to be confined to specific endocrine cells.

Xenin stimulates exocrine pancreatic secretion. It inhibits pentagastrin-stimulated secretion of acid, to induce exocrine pancreatic secretion and to affect small and large intestinal motility. In the gut, xenin interacts with the neurotensin receptor. The protein is Coatomer subunit alpha (COPA) of Canis lupus familiaris (Dog).